The sequence spans 710 residues: Methionine--tRNA ligase (710 aa).

Positions 26-36 (PYANGQIHIGH) match the 'HIGH' region motif. Positions 157, 160, 170, and 173 each coordinate Zn(2+). The short motif at 347–351 (KMSKS) is the 'KMSKS' region element. Residue Lys350 coordinates ATP. The tRNA-binding domain occupies 604 to 710 (DFAKIDLRIA…SGAKPGMRVK (107 aa)).

Belongs to the class-I aminoacyl-tRNA synthetase family. MetG type 1 subfamily. As to quaternary structure, homodimer. Zn(2+) is required as a cofactor.

It is found in the cytoplasm. It carries out the reaction tRNA(Met) + L-methionine + ATP = L-methionyl-tRNA(Met) + AMP + diphosphate. Is required not only for elongation of protein synthesis but also for the initiation of all mRNA translation through initiator tRNA(fMet) aminoacylation. The protein is Methionine--tRNA ligase of Paraburkholderia xenovorans (strain LB400).